Reading from the N-terminus, the 488-residue chain is Ribulose bisphosphate carboxylase large chain (488 aa).

2 residues coordinate substrate: asparagine 127 and threonine 177. The Proton acceptor role is filled by lysine 179. Residue lysine 181 participates in substrate binding. Residues lysine 205, aspartate 207, and glutamate 208 each coordinate Mg(2+). At lysine 205 the chain carries N6-carboxylysine. The active-site Proton acceptor is the histidine 297. Arginine 298, histidine 330, and serine 382 together coordinate substrate.

It belongs to the RuBisCO large chain family. Type I subfamily. As to quaternary structure, heterohexadecamer of 8 large chains and 8 small chains. Mg(2+) serves as cofactor.

It localises to the plastid. The protein resides in the chloroplast. It carries out the reaction 2 (2R)-3-phosphoglycerate + 2 H(+) = D-ribulose 1,5-bisphosphate + CO2 + H2O. The enzyme catalyses D-ribulose 1,5-bisphosphate + O2 = 2-phosphoglycolate + (2R)-3-phosphoglycerate + 2 H(+). Its function is as follows. RuBisCO catalyzes two reactions: the carboxylation of D-ribulose 1,5-bisphosphate, the primary event in carbon dioxide fixation, as well as the oxidative fragmentation of the pentose substrate in the photorespiration process. Both reactions occur simultaneously and in competition at the same active site. This chain is Ribulose bisphosphate carboxylase large chain, found in Rhodomonas salina (Cryptomonas salina).